Here is a 314-residue protein sequence, read N- to C-terminus: tRNA uridine(34) hydroxylase (314 aa).

Positions serine 140–serine 234 constitute a Rhodanese domain. The active-site Cysteine persulfide intermediate is the cysteine 194.

It belongs to the TrhO family.

The catalysed reaction is uridine(34) in tRNA + AH2 + O2 = 5-hydroxyuridine(34) in tRNA + A + H2O. Its function is as follows. Catalyzes oxygen-dependent 5-hydroxyuridine (ho5U) modification at position 34 in tRNAs. The sequence is that of tRNA uridine(34) hydroxylase from Acinetobacter baylyi (strain ATCC 33305 / BD413 / ADP1).